Here is a 396-residue protein sequence, read N- to C-terminus: Putative cyclin-B3-1 (396 aa).

Positions 1–98 (MLRDGNKQSK…KVLDVTAKPK (98 aa)) are disordered. The segment covering 21–32 (KTTVKTSLQNRS) has biased composition (polar residues). Residues 39–57 (VGRSKSRSISSIPSSAVAS) show a composition bias toward low complexity. Residues 76–85 (GESSSSGNKD) are compositionally biased toward polar residues.

This sequence belongs to the cyclin family. Cyclin AB subfamily.

In Arabidopsis thaliana (Mouse-ear cress), this protein is Putative cyclin-B3-1 (CYCB3-1).